Consider the following 396-residue polypeptide: 1-deoxy-D-xylulose 5-phosphate reductoisomerase (396 aa).

Positions 15, 16, 18, and 127 each coordinate NADPH. Lysine 128 is a 1-deoxy-D-xylulose 5-phosphate binding site. Residue glutamate 129 participates in NADPH binding. Aspartate 153 contacts Mn(2+). Residues serine 154, glutamate 155, serine 177, and histidine 200 each coordinate 1-deoxy-D-xylulose 5-phosphate. Glutamate 155 is a binding site for Mn(2+). Glycine 206 provides a ligand contact to NADPH. Positions 213, 218, 219, and 222 each coordinate 1-deoxy-D-xylulose 5-phosphate. Glutamate 222 serves as a coordination point for Mn(2+).

Belongs to the DXR family. Mg(2+) serves as cofactor. Requires Mn(2+) as cofactor.

It carries out the reaction 2-C-methyl-D-erythritol 4-phosphate + NADP(+) = 1-deoxy-D-xylulose 5-phosphate + NADPH + H(+). It functions in the pathway isoprenoid biosynthesis; isopentenyl diphosphate biosynthesis via DXP pathway; isopentenyl diphosphate from 1-deoxy-D-xylulose 5-phosphate: step 1/6. Its function is as follows. Catalyzes the NADPH-dependent rearrangement and reduction of 1-deoxy-D-xylulose-5-phosphate (DXP) to 2-C-methyl-D-erythritol 4-phosphate (MEP). This chain is 1-deoxy-D-xylulose 5-phosphate reductoisomerase, found in Anaplasma marginale (strain Florida).